Reading from the N-terminus, the 260-residue chain is Spectinomycin 9-adenylyltransferase (260 aa).

The catalysed reaction is spectinomycin + ATP = 9-O-adenylylspectinomycin + diphosphate. Mediates bacterial resistance to the antibiotic spectinomycin but not streptomycin. The sequence is that of Spectinomycin 9-adenylyltransferase (ant1) from Staphylococcus aureus (strain Mu50 / ATCC 700699).